Consider the following 631-residue polypeptide: tRNA uridine 5-carboxymethylaminomethyl modification enzyme MnmG (631 aa).

Residues 13 to 18 (GGGHAG), V125, and S180 each bind FAD. Residue 273–287 (GPRYCPSIEDKVMRF) coordinates NAD(+). Q370 is a binding site for FAD.

Belongs to the MnmG family. In terms of assembly, homodimer. Heterotetramer of two MnmE and two MnmG subunits. It depends on FAD as a cofactor.

The protein localises to the cytoplasm. Its function is as follows. NAD-binding protein involved in the addition of a carboxymethylaminomethyl (cmnm) group at the wobble position (U34) of certain tRNAs, forming tRNA-cmnm(5)s(2)U34. This is tRNA uridine 5-carboxymethylaminomethyl modification enzyme MnmG from Vibrio atlanticus (strain LGP32) (Vibrio splendidus (strain Mel32)).